The following is a 160-amino-acid chain: Eukaryotic translation initiation factor 5A (160 aa).

Residues M1–A12 show a composition bias toward basic and acidic residues. The disordered stretch occupies residues M1–P21. K52 is modified (hypusine).

Belongs to the eIF-5A family. Lys-53 undergoes hypusination, a unique post-translational modification that consists in the addition of a butylamino group from spermidine to lysine side chain, leading to the formation of the unusual amino acid hypusine. eIF-5As are the only known proteins to undergo this modification, which is essential for their function.

Translation factor that promotes translation elongation and termination, particularly upon ribosome stalling at specific amino acid sequence contexts. Binds between the exit (E) and peptidyl (P) site of the ribosome and promotes rescue of stalled ribosome: specifically required for efficient translation of polyproline-containing peptides as well as other motifs that stall the ribosome. Acts as a ribosome quality control (RQC) cofactor by joining the RQC complex to facilitate peptidyl transfer during CAT tailing step. This is Eukaryotic translation initiation factor 5A from Manihot esculenta (Cassava).